Reading from the N-terminus, the 154-residue chain is 6,7-dimethyl-8-ribityllumazine synthase (154 aa).

Residues phenylalanine 22, 56–58, and 80–82 contribute to the 5-amino-6-(D-ribitylamino)uracil site; these read SFE and AVI. 85-86 serves as a coordination point for (2S)-2-hydroxy-3-oxobutyl phosphate; the sequence is ST. Histidine 88 acts as the Proton donor in catalysis. Tyrosine 113 serves as a coordination point for 5-amino-6-(D-ribitylamino)uracil. Arginine 127 is a binding site for (2S)-2-hydroxy-3-oxobutyl phosphate.

The protein belongs to the DMRL synthase family. Forms an icosahedral capsid composed of 60 subunits, arranged as a dodecamer of pentamers.

The enzyme catalyses (2S)-2-hydroxy-3-oxobutyl phosphate + 5-amino-6-(D-ribitylamino)uracil = 6,7-dimethyl-8-(1-D-ribityl)lumazine + phosphate + 2 H2O + H(+). The protein operates within cofactor biosynthesis; riboflavin biosynthesis; riboflavin from 2-hydroxy-3-oxobutyl phosphate and 5-amino-6-(D-ribitylamino)uracil: step 1/2. Catalyzes the formation of 6,7-dimethyl-8-ribityllumazine by condensation of 5-amino-6-(D-ribitylamino)uracil with 3,4-dihydroxy-2-butanone 4-phosphate. This is the penultimate step in the biosynthesis of riboflavin. This Persephonella marina (strain DSM 14350 / EX-H1) protein is 6,7-dimethyl-8-ribityllumazine synthase.